The following is a 446-amino-acid chain: Histidine--tRNA ligase (446 aa).

The protein belongs to the class-II aminoacyl-tRNA synthetase family. As to quaternary structure, homodimer.

The protein localises to the cytoplasm. The enzyme catalyses tRNA(His) + L-histidine + ATP = L-histidyl-tRNA(His) + AMP + diphosphate + H(+). The polypeptide is Histidine--tRNA ligase (Burkholderia vietnamiensis (strain G4 / LMG 22486) (Burkholderia cepacia (strain R1808))).